A 90-amino-acid polypeptide reads, in one-letter code: Small ribosomal subunit protein uS15c (90 aa).

The protein belongs to the universal ribosomal protein uS15 family. In terms of assembly, part of the 30S ribosomal subunit.

It localises to the plastid. The protein localises to the chloroplast. This is Small ribosomal subunit protein uS15c (rps15) from Phaseolus vulgaris (Kidney bean).